A 53-amino-acid chain; its full sequence is UPF0391 membrane protein BPSS2216 (53 aa).

2 helical membrane-spanning segments follow: residues 5-25 and 30-50; these read ALVF…GIAA and IAKI…VLGV.

This sequence belongs to the UPF0391 family.

Its subcellular location is the cell membrane. The chain is UPF0391 membrane protein BPSS2216 from Burkholderia pseudomallei (strain K96243).